The sequence spans 151 residues: Large ribosomal subunit protein uL13 (151 aa).

Residues 126-151 are disordered; it reads YPGSNHPHEAQKPEKLTIQTIPGGER. Residues 131-140 show a composition bias toward basic and acidic residues; it reads HPHEAQKPEK.

Belongs to the universal ribosomal protein uL13 family. In terms of assembly, part of the 50S ribosomal subunit.

Functionally, this protein is one of the early assembly proteins of the 50S ribosomal subunit, although it is not seen to bind rRNA by itself. It is important during the early stages of 50S assembly. The chain is Large ribosomal subunit protein uL13 from Trichodesmium erythraeum (strain IMS101).